Here is a 431-residue protein sequence, read N- to C-terminus: Enolase (431 aa).

Gln-164 contributes to the (2R)-2-phosphoglycerate binding site. The active-site Proton donor is the Glu-206. The Mg(2+) site is built by Asp-243, Glu-288, and Asp-315. Residues Lys-340, Arg-369, Ser-370, and Lys-391 each contribute to the (2R)-2-phosphoglycerate site. Lys-340 functions as the Proton acceptor in the catalytic mechanism.

Belongs to the enolase family. Requires Mg(2+) as cofactor.

The protein resides in the cytoplasm. The protein localises to the secreted. It localises to the cell surface. It carries out the reaction (2R)-2-phosphoglycerate = phosphoenolpyruvate + H2O. The protein operates within carbohydrate degradation; glycolysis; pyruvate from D-glyceraldehyde 3-phosphate: step 4/5. In terms of biological role, catalyzes the reversible conversion of 2-phosphoglycerate (2-PG) into phosphoenolpyruvate (PEP). It is essential for the degradation of carbohydrates via glycolysis. The sequence is that of Enolase from Fervidobacterium nodosum (strain ATCC 35602 / DSM 5306 / Rt17-B1).